The chain runs to 130 residues: MARVTYYGTGRRKNAIARVRLVPGEGNITINKRNIEEYFNYETLRRDVRLPLELTETLSQFDVLATVNGGGYTGQAGALRHGIARALLKADDELRPALKKAGYLTRDSRMKERKKYGLKGARRAPQFSKR.

Residues 109–130 (RMKERKKYGLKGARRAPQFSKR) form a disordered region. A compositionally biased stretch (basic residues) spans 111–130 (KERKKYGLKGARRAPQFSKR).

Belongs to the universal ribosomal protein uS9 family.

This chain is Small ribosomal subunit protein uS9, found in Alkaliphilus metalliredigens (strain QYMF).